A 334-amino-acid chain; its full sequence is Adenine deaminase (334 aa).

Zn(2+) is bound by residues His-17, His-19, and His-197. The Proton donor role is filled by Glu-200. Zn(2+) is bound at residue Asp-278. Residue Asp-279 participates in substrate binding.

It belongs to the metallo-dependent hydrolases superfamily. Adenosine and AMP deaminases family. Adenine deaminase type 2 subfamily. Requires Zn(2+) as cofactor.

It catalyses the reaction adenine + H2O + H(+) = hypoxanthine + NH4(+). Catalyzes the hydrolytic deamination of adenine to hypoxanthine. Plays an important role in the purine salvage pathway and in nitrogen catabolism. The sequence is that of Adenine deaminase from Rhodospirillum rubrum (strain ATCC 11170 / ATH 1.1.1 / DSM 467 / LMG 4362 / NCIMB 8255 / S1).